Consider the following 282-residue polypeptide: Probable endonuclease 4 (282 aa).

9 residues coordinate Zn(2+): H66, H106, E143, D176, H179, H213, D226, H228, and E258.

It belongs to the AP endonuclease 2 family. It depends on Zn(2+) as a cofactor.

The catalysed reaction is Endonucleolytic cleavage to 5'-phosphooligonucleotide end-products.. Functionally, endonuclease IV plays a role in DNA repair. It cleaves phosphodiester bonds at apurinic or apyrimidinic (AP) sites, generating a 3'-hydroxyl group and a 5'-terminal sugar phosphate. The polypeptide is Probable endonuclease 4 (Aquifex aeolicus (strain VF5)).